The primary structure comprises 848 residues: Trimethylamine-N-oxide reductase 1 (848 aa).

A signal peptide (tat-type signal) is located at residues 1–39 (MNNNDLFQASRRRFLAQLGGLTVAGMLGPSLLTPRRATA). Serine 191 is a binding site for Mo-bis(molybdopterin guanine dinucleotide).

It belongs to the prokaryotic molybdopterin-containing oxidoreductase family. As to quaternary structure, interacts with the N-terminal domain of TorC. The cofactor is Mo-bis(molybdopterin guanine dinucleotide). Post-translationally, exported by the Tat system. The position of the signal peptide cleavage has been experimentally proven.

Its subcellular location is the periplasm. The enzyme catalyses trimethylamine + 2 Fe(III)-[cytochrome c] + H2O = trimethylamine N-oxide + 2 Fe(II)-[cytochrome c] + 3 H(+). Its function is as follows. Reduces trimethylamine-N-oxide (TMAO) into trimethylamine; an anaerobic reaction coupled to energy-yielding reactions. In Escherichia coli (strain K12), this protein is Trimethylamine-N-oxide reductase 1 (torA).